The primary structure comprises 251 residues: Methionine aminopeptidase (251 aa).

Histidine 76 lines the substrate pocket. Residues aspartate 93, aspartate 104, and histidine 168 each contribute to the a divalent metal cation site. Histidine 175 is a binding site for substrate. A divalent metal cation contacts are provided by glutamate 202 and glutamate 233.

It belongs to the peptidase M24A family. Methionine aminopeptidase type 1 subfamily. Monomer. The cofactor is Co(2+). Zn(2+) serves as cofactor. Mn(2+) is required as a cofactor. It depends on Fe(2+) as a cofactor.

It carries out the reaction Release of N-terminal amino acids, preferentially methionine, from peptides and arylamides.. Functionally, removes the N-terminal methionine from nascent proteins. The N-terminal methionine is often cleaved when the second residue in the primary sequence is small and uncharged (Met-Ala-, Cys, Gly, Pro, Ser, Thr, or Val). Requires deformylation of the N(alpha)-formylated initiator methionine before it can be hydrolyzed. The polypeptide is Methionine aminopeptidase (Staphylococcus epidermidis (strain ATCC 12228 / FDA PCI 1200)).